Here is a 546-residue protein sequence, read N- to C-terminus: Germacrene-D synthase (546 aa).

Mg(2+)-binding residues include D303, D307, D448, and E456. A DDXXD motif motif is present at residues 303 to 307 (DDIYD).

Belongs to the terpene synthase family. It depends on Mg(2+) as a cofactor. Mn(2+) serves as cofactor.

It carries out the reaction (2E,6E)-farnesyl diphosphate = (-)-germacrene D + diphosphate. Its pathway is secondary metabolite biosynthesis; terpenoid biosynthesis. Functionally, sesquiterpene synthase that catalyzes the formation of germacrene D from trans,trans-farnesyl diphosphate (FPP). The protein is Germacrene-D synthase (GDS) of Ocimum basilicum (Sweet basil).